The primary structure comprises 228 residues: Ribose-5-phosphate isomerase A (228 aa).

Residues 32–35, 85–88, and 98–101 contribute to the substrate site; these read TGST, DGAD, and KGGG. Glu107 acts as the Proton acceptor in catalysis. Lys125 serves as a coordination point for substrate.

The protein belongs to the ribose 5-phosphate isomerase family. Homodimer.

It carries out the reaction aldehydo-D-ribose 5-phosphate = D-ribulose 5-phosphate. It participates in carbohydrate degradation; pentose phosphate pathway; D-ribose 5-phosphate from D-ribulose 5-phosphate (non-oxidative stage): step 1/1. In terms of biological role, catalyzes the reversible conversion of ribose-5-phosphate to ribulose 5-phosphate. The protein is Ribose-5-phosphate isomerase A of Cupriavidus necator (strain ATCC 17699 / DSM 428 / KCTC 22496 / NCIMB 10442 / H16 / Stanier 337) (Ralstonia eutropha).